Here is a 719-residue protein sequence, read N- to C-terminus: Serine/threonine-protein kinase PAK 5 (719 aa).

Disordered regions lie at residues 1-28, 96-118, 226-245, 253-298, and 339-372; these read MFGK…FDPQ, RSNS…RIQG, SPLD…TSRC, SESD…PMMP, and VFSP…GSHQ. The 14-residue stretch at 11-24 folds into the CRIB domain; the sequence is ISGPSNFEHRVHTG. Residues 25-448 form a linker region; it reads FDPQEQKFTG…VVSPGDPREY (424 aa). Ser-104 bears the Phosphoserine mark. Thr-107 is modified (phosphothreonine). A compositionally biased stretch (polar residues) spans 226-244; it reads SPLDYSFQLTPSRTAGTSR. A compositionally biased stretch (polar residues) spans 357 to 372; the sequence is LPQSQSKAGYSSGSHQ. The Protein kinase domain maps to 449–700; sequence LDNFIKIGEG…AQELLGHPFL (252 aa). Residues 455–463 and Lys-478 each bind ATP; that span reads IGEGSTGIV. Asp-568 serves as the catalytic Proton acceptor.

It belongs to the protein kinase superfamily. STE Ser/Thr protein kinase family. STE20 subfamily. As to quaternary structure, interacts tightly with GTP-bound but not GDP-bound CDC42/p21 and RAC1. Interacts with MARK2, leading to inhibit MARK2 independently of kinase activity. Interacts with RHOD and RHOH. Autophosphorylated when activated by CDC42/p21. Highly expressed in brain and eye. Also expressed in adrenal gland, pancreas, prostate and testes. Within the brain, expression is restricted to neurons. Present in brain but not in kidney, lung and spleen (at protein level).

The protein resides in the mitochondrion. It localises to the cytoplasm. It is found in the nucleus. It carries out the reaction L-seryl-[protein] + ATP = O-phospho-L-seryl-[protein] + ADP + H(+). The enzyme catalyses L-threonyl-[protein] + ATP = O-phospho-L-threonyl-[protein] + ADP + H(+). Serine/threonine protein kinase that plays a role in a variety of different signaling pathways including cytoskeleton regulation, cell migration, proliferation or cell survival. Activation by various effectors including growth factor receptors or active CDC42 and RAC1 results in a conformational change and a subsequent autophosphorylation on several serine and/or threonine residues. Phosphorylates the proto-oncogene RAF1 and stimulates its kinase activity. Promotes cell survival by phosphorylating the BCL2 antagonist of cell death BAD. Phosphorylates CTNND1, probably to regulate cytoskeletal organization and cell morphology. Keeps microtubules stable through MARK2 inhibition and destabilizes the F-actin network leading to the disappearance of stress fibers and focal adhesions. The sequence is that of Serine/threonine-protein kinase PAK 5 from Mus musculus (Mouse).